We begin with the raw amino-acid sequence, 569 residues long: 2-succinyl-5-enolpyruvyl-6-hydroxy-3-cyclohexene-1-carboxylate synthase (569 aa).

It belongs to the TPP enzyme family. MenD subfamily. As to quaternary structure, homodimer. It depends on Mg(2+) as a cofactor. Requires Mn(2+) as cofactor. Thiamine diphosphate serves as cofactor.

The enzyme catalyses isochorismate + 2-oxoglutarate + H(+) = 5-enolpyruvoyl-6-hydroxy-2-succinyl-cyclohex-3-ene-1-carboxylate + CO2. The protein operates within quinol/quinone metabolism; 1,4-dihydroxy-2-naphthoate biosynthesis; 1,4-dihydroxy-2-naphthoate from chorismate: step 2/7. It functions in the pathway quinol/quinone metabolism; menaquinone biosynthesis. Functionally, catalyzes the thiamine diphosphate-dependent decarboxylation of 2-oxoglutarate and the subsequent addition of the resulting succinic semialdehyde-thiamine pyrophosphate anion to isochorismate to yield 2-succinyl-5-enolpyruvyl-6-hydroxy-3-cyclohexene-1-carboxylate (SEPHCHC). The chain is 2-succinyl-5-enolpyruvyl-6-hydroxy-3-cyclohexene-1-carboxylate synthase from Shewanella sediminis (strain HAW-EB3).